The chain runs to 352 residues: UDP-3-O-acylglucosamine N-acyltransferase (352 aa).

H244 serves as the catalytic Proton acceptor.

This sequence belongs to the transferase hexapeptide repeat family. LpxD subfamily. As to quaternary structure, homotrimer.

It catalyses the reaction a UDP-3-O-[(3R)-3-hydroxyacyl]-alpha-D-glucosamine + a (3R)-hydroxyacyl-[ACP] = a UDP-2-N,3-O-bis[(3R)-3-hydroxyacyl]-alpha-D-glucosamine + holo-[ACP] + H(+). The protein operates within bacterial outer membrane biogenesis; LPS lipid A biosynthesis. Functionally, catalyzes the N-acylation of UDP-3-O-acylglucosamine using 3-hydroxyacyl-ACP as the acyl donor. Is involved in the biosynthesis of lipid A, a phosphorylated glycolipid that anchors the lipopolysaccharide to the outer membrane of the cell. This chain is UDP-3-O-acylglucosamine N-acyltransferase, found in Leptospira biflexa serovar Patoc (strain Patoc 1 / Ames).